A 911-amino-acid chain; its full sequence is Golgin IMH1 (911 aa).

2 disordered regions span residues 16–41 (LAKG…SGLP) and 271–314 (KELP…ETVD). Residues 101–280 (FFQDLNNKNN…KELPKAISHQ (180 aa)) are a coiled coil. The span at 286-299 (NRRKKNRNKGKKNK) shows a compositional bias: basic residues. A phosphoserine mark is found at Ser-308 and Ser-660. Coiled-coil stretches lie at residues 312–735 (TVDN…ALKH) and 766–814 (SKAD…KERQ). Residues 814–850 (QYSDKSGRVSRSGSIGTLANANIDSSPANNSNPTKLE) are disordered. Residues 822–847 (VSRSGSIGTLANANIDSSPANNSNPT) are compositionally biased toward polar residues. Ser-827 carries the post-translational modification Phosphoserine. The residue at position 830 (Thr-830) is a Phosphothreonine. The GRIP domain occupies 861–909 (DSEKNEKIAYIKNVLLGFLEHKEQRNQLLPVISMLLQLDSTDEKRLVMS).

Forms oligomers and is present in high-molecular-mass complexes. Interacts with ARL1.

It is found in the cytoplasm. The protein localises to the golgi apparatus membrane. Involved in vesicular transport between an endosomal compartment and the Golgi apparatus. The chain is Golgin IMH1 (IMH1) from Saccharomyces cerevisiae (strain ATCC 204508 / S288c) (Baker's yeast).